The following is a 95-amino-acid chain: Aspartyl/glutamyl-tRNA(Asn/Gln) amidotransferase subunit C (95 aa).

The protein belongs to the GatC family. Heterotrimer of A, B and C subunits.

It carries out the reaction L-glutamyl-tRNA(Gln) + L-glutamine + ATP + H2O = L-glutaminyl-tRNA(Gln) + L-glutamate + ADP + phosphate + H(+). The enzyme catalyses L-aspartyl-tRNA(Asn) + L-glutamine + ATP + H2O = L-asparaginyl-tRNA(Asn) + L-glutamate + ADP + phosphate + 2 H(+). In terms of biological role, allows the formation of correctly charged Asn-tRNA(Asn) or Gln-tRNA(Gln) through the transamidation of misacylated Asp-tRNA(Asn) or Glu-tRNA(Gln) in organisms which lack either or both of asparaginyl-tRNA or glutaminyl-tRNA synthetases. The reaction takes place in the presence of glutamine and ATP through an activated phospho-Asp-tRNA(Asn) or phospho-Glu-tRNA(Gln). The sequence is that of Aspartyl/glutamyl-tRNA(Asn/Gln) amidotransferase subunit C from Brucella anthropi (strain ATCC 49188 / DSM 6882 / CCUG 24695 / JCM 21032 / LMG 3331 / NBRC 15819 / NCTC 12168 / Alc 37) (Ochrobactrum anthropi).